A 953-amino-acid chain; its full sequence is Coatomer subunit beta (953 aa).

The residue at position 2 (T2) is an N-acetylthreonine. 6 HEAT repeats span residues 96–131 (HEMI…KEAE), 132–168 (LLEP…NFEH), 240–276 (SERA…SAPT), 277–314 (AIKA…HPAH), 316–353 (RVLQ…SRNV), and 396–433 (DMAA…RFDN). N6-acetyllysine is present on K494.

As to quaternary structure, oligomeric complex that consists of at least the alpha, beta, beta', gamma, delta, epsilon and zeta subunits. Interacts with CAPN8. Interacts with SCYL1 and PRKCE. Interacts with COPG1. Interacts with ARF1 (myristoylated); this interaction is required for binding of COPB1 to Golgi membranes. Interacts (via trunk domain) with ARF1 (via switch I region); the interaction is direct. Interacts with KCNK2 (via N-terminus); this interaction increases the channel-mediated whole cell currents and promotes plasma membrane expression of KCNK2. Interacts with STX17. Interacts with TMEM115. Interacts with TMEM41B. In terms of processing, proteolytically cleaved between Ser-528 and Ser-529 by CAPN8. In terms of tissue distribution, predominantly expressed in the upper one-third of the oxyntic mucosa and in most regions of the pyloric mucosa. Ubiquitously expressed including platelet, liver, heart, spleen, lung and kidney.

It localises to the cytoplasm. Its subcellular location is the golgi apparatus membrane. It is found in the cytoplasmic vesicle. The protein localises to the COPI-coated vesicle membrane. The protein resides in the cell membrane. It localises to the endoplasmic reticulum-Golgi intermediate compartment. In terms of biological role, the coatomer is a cytosolic protein complex that binds to dilysine motifs and reversibly associates with Golgi non-clathrin-coated vesicles, which further mediate biosynthetic protein transport from the ER, via the Golgi up to the trans Golgi network. Coatomer complex is required for budding from Golgi membranes, and is essential for the retrograde Golgi-to-ER transport of dilysine-tagged proteins. In mammals, the coatomer can only be recruited by membranes associated to ADP-ribosylation factors (ARFs), which are small GTP-binding proteins; the complex also influences the Golgi structural integrity, as well as the processing, activity, and endocytic recycling of LDL receptors. Involved in the Golgi disassembly and reassembly processes during cell cycle. Involved in autophagy by playing a role in early endosome function. Plays a role in organellar compartmentalization of secretory compartments including endoplasmic reticulum (ER)-Golgi intermediate compartment (ERGIC), Golgi, trans-Golgi network (TGN) and recycling endosomes, and in biosynthetic transport of CAV1. Plays a functional role in facilitating the transport of kappa-type opioid receptor mRNAs into axons and enhances translation of these proteins in cortical neurons. Required for limiting lipid storage in lipid droplets. Involved in lipid homeostasis by regulating the presence of perilipin family members PLIN2 and PLIN3 at the lipid droplet surface and promoting the association of adipocyte triglyceride lipase (PNPLA2) with the lipid droplet surface to mediate lipolysis. The protein is Coatomer subunit beta (Copb1) of Mus musculus (Mouse).